A 329-amino-acid polypeptide reads, in one-letter code: Malate dehydrogenase (329 aa).

11–17 contributes to the NAD(+) binding site; it reads GAAGQIA. Positions 92 and 98 each coordinate substrate. NAD(+)-binding positions include asparagine 105, glutamine 112, and 129–131; that span reads VGN. 2 residues coordinate substrate: asparagine 131 and arginine 162. Histidine 187 functions as the Proton acceptor in the catalytic mechanism.

Belongs to the LDH/MDH superfamily. MDH type 2 family.

The enzyme catalyses (S)-malate + NAD(+) = oxaloacetate + NADH + H(+). In terms of biological role, catalyzes the reversible oxidation of malate to oxaloacetate. The polypeptide is Malate dehydrogenase (Akkermansia muciniphila (strain ATCC BAA-835 / DSM 22959 / JCM 33894 / BCRC 81048 / CCUG 64013 / CIP 107961 / Muc)).